A 377-amino-acid chain; its full sequence is Chaperone protein DnaJ (377 aa).

The J domain occupies 5-70; the sequence is DYYQILGIPK…EKRSAYDQYG (66 aa). Residues 132-210 form a CR-type zinc finger; the sequence is GIKKEIQIPT…CHGQGRVETY (79 aa). Zn(2+)-binding residues include C145, C148, C162, C165, C184, C187, C198, and C201. CXXCXGXG motif repeat units lie at residues 145–152, 162–169, 184–191, and 198–205; these read CKTCYGSG, CSTCHGKG, CPTCHGKG, and CNLCHGQG.

Belongs to the DnaJ family. In terms of assembly, homodimer. The cofactor is Zn(2+).

It is found in the cytoplasm. In terms of biological role, participates actively in the response to hyperosmotic and heat shock by preventing the aggregation of stress-denatured proteins and by disaggregating proteins, also in an autonomous, DnaK-independent fashion. Unfolded proteins bind initially to DnaJ; upon interaction with the DnaJ-bound protein, DnaK hydrolyzes its bound ATP, resulting in the formation of a stable complex. GrpE releases ADP from DnaK; ATP binding to DnaK triggers the release of the substrate protein, thus completing the reaction cycle. Several rounds of ATP-dependent interactions between DnaJ, DnaK and GrpE are required for fully efficient folding. Also involved, together with DnaK and GrpE, in the DNA replication of plasmids through activation of initiation proteins. The chain is Chaperone protein DnaJ from Buchnera aphidicola subsp. Acyrthosiphon pisum (strain Tuc7).